A 1207-amino-acid chain; its full sequence is Dermatan-sulfate epimerase-like protein (1207 aa).

A signal peptide spans 1-22 (MAFMFTEHLLFLTLMMCSFSTC). Residues Asn28, Asn661, Asn683, and Asn704 are each glycosylated (N-linked (GlcNAc...) asparagine). 2 helical membrane-spanning segments follow: residues 761-781 (FPFGFKFNIAVGFILCISLVI) and 798-818 (CVLILVIALWFIELLDVWSTC). A glycan (N-linked (GlcNAc...) asparagine) is linked at Asn869.

Belongs to the dermatan-sulfate isomerase family.

Its subcellular location is the membrane. This is Dermatan-sulfate epimerase-like protein (Dsel) from Mus musculus (Mouse).